A 179-amino-acid polypeptide reads, in one-letter code: Large ribosomal subunit protein uL5 (179 aa).

The protein belongs to the universal ribosomal protein uL5 family. Part of the 50S ribosomal subunit; part of the 5S rRNA/L5/L18/L25 subcomplex. Contacts the 5S rRNA and the P site tRNA. Forms a bridge to the 30S subunit in the 70S ribosome.

Its function is as follows. This is one of the proteins that bind and probably mediate the attachment of the 5S RNA into the large ribosomal subunit, where it forms part of the central protuberance. In the 70S ribosome it contacts protein S13 of the 30S subunit (bridge B1b), connecting the 2 subunits; this bridge is implicated in subunit movement. Contacts the P site tRNA; the 5S rRNA and some of its associated proteins might help stabilize positioning of ribosome-bound tRNAs. The polypeptide is Large ribosomal subunit protein uL5 (Maridesulfovibrio salexigens (strain ATCC 14822 / DSM 2638 / NCIMB 8403 / VKM B-1763) (Desulfovibrio salexigens)).